The sequence spans 328 residues: Tetraacyldisaccharide 4'-kinase (328 aa).

55-62 (TAGGNGKT) serves as a coordination point for ATP.

It belongs to the LpxK family.

The catalysed reaction is a lipid A disaccharide + ATP = a lipid IVA + ADP + H(+). The protein operates within glycolipid biosynthesis; lipid IV(A) biosynthesis; lipid IV(A) from (3R)-3-hydroxytetradecanoyl-[acyl-carrier-protein] and UDP-N-acetyl-alpha-D-glucosamine: step 6/6. Functionally, transfers the gamma-phosphate of ATP to the 4'-position of a tetraacyldisaccharide 1-phosphate intermediate (termed DS-1-P) to form tetraacyldisaccharide 1,4'-bis-phosphate (lipid IVA). This chain is Tetraacyldisaccharide 4'-kinase, found in Shigella flexneri serotype 5b (strain 8401).